Reading from the N-terminus, the 670-residue chain is Tyramine beta-hydroxylase (670 aa).

Positions 26 to 35 are enriched in basic residues; sequence HHQLAYHHHK. The interval 26 to 63 is disordered; that stretch reads HHQLAYHHHKQEQQQQQQQQQQQQAKQKQKQNGVQQGR. The span at 38 to 61 shows a compositional bias: low complexity; sequence QQQQQQQQQQQQAKQKQKQNGVQQ. A helical transmembrane segment spans residues 65 to 81; the sequence is PTFMPVMLLLLMATLLT. The DOMON domain occupies 104–220; the sequence is KEIKLSWMVD…GTMYVVWARG (117 aa). N-linked (GlcNAc...) asparagine glycosylation occurs at N235. Y281 is an active-site residue. Cystine bridges form between C283-C334 and C319-C344. Residues H312 and H313 each contribute to the Cu(2+) site. Cu(2+)-binding residues include H382, H461, H463, and M536. Intrachain disulfides connect C439/C552, C443/C613, and C515/C537. H461 is a catalytic residue. N-linked (GlcNAc...) asparagine glycosylation is present at N614.

This sequence belongs to the copper type II ascorbate-dependent monooxygenase family. As to quaternary structure, is most likely a monomer under physiological conditions, although under conditions of high pH and low ionic strength the dimeric form predominates. Both forms are equally active. It depends on Cu(2+) as a cofactor. As to expression, present in head and in neurons innervating the oviduct (at protein level).

The protein localises to the membrane. It catalyses the reaction tyramine + L-ascorbate + O2 = (R)-octopamine + L-dehydroascorbate + H2O. In terms of biological role, catalyzes the hydroxylation of tyramine into octopamine, a neurotransmitter involved in ovulation and locomotion. Functions in an amine-mediated Bacc-dependent signaling pathway that negatively regulates acute ethanol sensitivity. Involved in facilitation of nociceptive escape behavior in response to potentially damaging stimuli, such as high temperatures. This chain is Tyramine beta-hydroxylase (Tbh), found in Drosophila melanogaster (Fruit fly).